The chain runs to 1025 residues: Multidrug resistance protein MdtC (1025 aa).

12 consecutive transmembrane segments (helical) span residues 3–23, 333–353, 360–380, 387–407, 431–451, 463–483, 528–548, 853–873, 875–895, 897–917, 953–973, and 984–1004; these read FFAL…AITL, EVEQ…FLFL, IIPA…MYLC, LSLM…IVVL, VGFT…PLLL, FAVT…TLTP, LVGM…ISIP, VILI…LYES, VHPL…LLAL, LFNA…IGIV, PIMM…LSGG, and ITIV…TPVV.

Belongs to the resistance-nodulation-cell division (RND) (TC 2.A.6) family. MdtC subfamily. As to quaternary structure, part of a tripartite efflux system composed of MdtA, MdtB and MdtC. MdtC forms a heteromultimer with MdtB.

It is found in the cell inner membrane. Functionally, the MdtABC tripartite complex confers resistance against novobiocin and deoxycholate. This chain is Multidrug resistance protein MdtC, found in Escherichia coli O157:H7 (strain EC4115 / EHEC).